The following is a 264-amino-acid chain: uncharacterized protein (264 aa).

Residues L7–T27 traverse the membrane as a helical segment.

It belongs to the staphylococcal tandem lipoprotein family.

Its subcellular location is the cell membrane. This is an uncharacterized protein from Staphylococcus aureus (strain N315).